We begin with the raw amino-acid sequence, 236 residues long: Orotidine 5'-phosphate decarboxylase (236 aa).

Residues aspartate 16, lysine 38, 65–74, threonine 124, arginine 185, glutamine 194, glycine 214, and arginine 215 contribute to the substrate site; that span reads DLKYHDIPNT. Lysine 67 serves as the catalytic Proton donor.

It belongs to the OMP decarboxylase family. Type 1 subfamily. Homodimer.

It catalyses the reaction orotidine 5'-phosphate + H(+) = UMP + CO2. It functions in the pathway pyrimidine metabolism; UMP biosynthesis via de novo pathway; UMP from orotate: step 2/2. Its function is as follows. Catalyzes the decarboxylation of orotidine 5'-monophosphate (OMP) to uridine 5'-monophosphate (UMP). The polypeptide is Orotidine 5'-phosphate decarboxylase (Hydrogenovibrio crunogenus (strain DSM 25203 / XCL-2) (Thiomicrospira crunogena)).